The chain runs to 250 residues: 1-(5-phosphoribosyl)-5-[(5-phosphoribosylamino)methylideneamino] imidazole-4-carboxamide isomerase (250 aa).

D8 serves as the catalytic Proton acceptor. The Proton donor role is filled by D131.

Belongs to the HisA/HisF family.

It is found in the cytoplasm. The enzyme catalyses 1-(5-phospho-beta-D-ribosyl)-5-[(5-phospho-beta-D-ribosylamino)methylideneamino]imidazole-4-carboxamide = 5-[(5-phospho-1-deoxy-D-ribulos-1-ylimino)methylamino]-1-(5-phospho-beta-D-ribosyl)imidazole-4-carboxamide. It functions in the pathway amino-acid biosynthesis; L-histidine biosynthesis; L-histidine from 5-phospho-alpha-D-ribose 1-diphosphate: step 4/9. In Paraburkholderia xenovorans (strain LB400), this protein is 1-(5-phosphoribosyl)-5-[(5-phosphoribosylamino)methylideneamino] imidazole-4-carboxamide isomerase.